The primary structure comprises 547 residues: Hydroxylamine reductase (547 aa).

Residues cysteine 5, cysteine 8, cysteine 17, and cysteine 23 each coordinate [4Fe-4S] cluster. Hybrid [4Fe-2O-2S] cluster is bound by residues histidine 242, glutamate 266, cysteine 310, cysteine 401, cysteine 429, cysteine 454, glutamate 489, and lysine 491. Residue cysteine 401 is modified to Cysteine persulfide.

It belongs to the HCP family. [4Fe-4S] cluster is required as a cofactor. Requires hybrid [4Fe-2O-2S] cluster as cofactor.

It is found in the cytoplasm. The enzyme catalyses A + NH4(+) + H2O = hydroxylamine + AH2 + H(+). Catalyzes the reduction of hydroxylamine to form NH(3) and H(2)O. This is Hydroxylamine reductase from Thermoanaerobacter pseudethanolicus (strain ATCC 33223 / 39E) (Clostridium thermohydrosulfuricum).